A 202-amino-acid chain; its full sequence is Rho GDP-dissociation inhibitor (202 aa).

Position 2 is an N-acetylalanine (Ala2). Phosphothreonine is present on Thr27. The residue at position 40 (Ser40) is a Phosphoserine.

This sequence belongs to the Rho GDI family.

The protein resides in the cytoplasm. Its function is as follows. Regulates the GDP/GTP exchange reaction of the Rho proteins by inhibiting the dissociation of GDP from them, and the subsequent binding of GTP to them. The protein is Rho GDP-dissociation inhibitor (RDI1) of Saccharomyces cerevisiae (strain ATCC 204508 / S288c) (Baker's yeast).